A 184-amino-acid chain; its full sequence is Photosystem I assembly protein Ycf4 (184 aa).

2 consecutive transmembrane segments (helical) span residues 19 to 39 and 57 to 77; these read LSNF…LLVG and FIFF…LFIS.

This sequence belongs to the Ycf4 family.

It is found in the plastid. The protein resides in the chloroplast thylakoid membrane. Its function is as follows. Seems to be required for the assembly of the photosystem I complex. The chain is Photosystem I assembly protein Ycf4 from Jasminum nudiflorum (Winter jasmine).